The sequence spans 390 residues: uncharacterized protein (390 aa).

A run of 11 helical transmembrane segments spans residues 7 to 27, 35 to 55, 77 to 97, 101 to 121, 128 to 148, 161 to 181, 203 to 223, 238 to 258, 281 to 301, 335 to 355, and 357 to 377; these read IYILAIVSFLVGTSEYIISGI, LGITLAAAGQLITIFSLVYAL, LGLFVFGNVLAFVLPGYGWFI, IIMAMGAGVVVVTALTIAAKI, GSAIATVVMGFTASLIIGVPL, VFGAIALLGLIAMVVIFFTLP, VAMGLSITFFWLGGYSVAYTY, LLSGVLLIFGIASLVGSKFGG, LILLSLVTHSYIGVLVILILW, MQFAMAVGAGIGGVFVENVSL, and SITWVGALGVMIAIIASLLIF.

This sequence belongs to the major facilitator superfamily.

It localises to the cell membrane. This is an uncharacterized protein from Bacillus subtilis (strain 168).